Reading from the N-terminus, the 652-residue chain is Carboxypeptidase S1 homolog A (652 aa).

A signal peptide spans 1–19; sequence MRLAASIAVALPVIGAASA. Cys-50 and Cys-121 are oxidised to a cystine. N-linked (GlcNAc...) asparagine glycans are attached at residues Asn-77, Asn-132, Asn-161, Asn-168, Asn-184, and Asn-202. The active site involves Ser-238. 4 N-linked (GlcNAc...) asparagine glycosylation sites follow: Asn-260, Asn-299, Asn-347, and Asn-410. Intrachain disulfides connect Cys-325-Cys-361 and Cys-332-Cys-354. The active site involves Asp-458. Position 461 (Cys-461) interacts with substrate. Residues Asn-474, Asn-492, and Asn-505 are each glycosylated (N-linked (GlcNAc...) asparagine). His-516 is an active-site residue. Substrate is bound at residue Glu-517. Asn-594 carries N-linked (GlcNAc...) asparagine glycosylation. Residues 608 to 628 are disordered; the sequence is AASKGNPPPTTTSSPTASPTA. A compositionally biased stretch (low complexity) spans 618 to 628; the sequence is TTSSPTASPTA. The GPI-anchor amidated glycine moiety is linked to residue Gly-629. Residues 630 to 652 constitute a propeptide, removed in mature form; it reads SAMLKAPVAMLAISALTVLAFYL.

The protein belongs to the peptidase S10 family.

It localises to the cell membrane. It carries out the reaction Preferential release of a C-terminal arginine or lysine residue.. Its function is as follows. Extracellular serine carboxypeptidase that contributes to pathogenicity. This chain is Carboxypeptidase S1 homolog A (SCPA), found in Trichophyton verrucosum (strain HKI 0517).